A 540-amino-acid chain; its full sequence is Glucose-6-phosphate isomerase (540 aa).

E351 serves as the catalytic Proton donor. Active-site residues include H382 and K506.

The protein belongs to the GPI family.

The protein localises to the cytoplasm. It carries out the reaction alpha-D-glucose 6-phosphate = beta-D-fructose 6-phosphate. Its pathway is carbohydrate biosynthesis; gluconeogenesis. The protein operates within carbohydrate degradation; glycolysis; D-glyceraldehyde 3-phosphate and glycerone phosphate from D-glucose: step 2/4. Catalyzes the reversible isomerization of glucose-6-phosphate to fructose-6-phosphate. This chain is Glucose-6-phosphate isomerase, found in Corynebacterium glutamicum (strain R).